Here is a 727-residue protein sequence, read N- to C-terminus: Capsid protein VP1 (727 aa).

Residues 1–10 (MAPPAKRARR) are compositionally biased toward basic residues. 3 disordered regions span residues 1-38 (MAPP…SDAA), 95-120 (VLTD…PPPH), and 141-184 (LAPM…VGIS). The short motif at 4–13 (PAKRARRGLV) is the Nuclear localization signal element. Residues 19-64 (YLGPGNSLDQGEPTNPSDAAAKEHDEAYAAYLRSGKNPYLYFSPAD) are phospholipase A2-like. Polar residues predominate over residues 25 to 35 (SLDQGEPTNPS). The segment covering 166–183 (SGNGSGGGGGGGSGGVGI) has biased composition (gly residues). Asn-323 contributes to the Mg(2+) binding site. The cysteines at positions 633 and 637 are disulfide-linked.

The protein belongs to the parvoviridae capsid protein family. In terms of assembly, interacts with host TFRC.

It localises to the virion. The protein resides in the host nucleus. Functionally, capsid protein self-assembles to form an icosahedral capsid with a T=1 symmetry, about 22 nm in diameter, and consisting of 60 copies of two size variants of the capsid proteins, VP1 and VP2, which differ by the presence of an N-terminal extension in the minor protein VP1. The capsid encapsulates the genomic ssDNA. Capsid proteins are responsible for the attachment to host cell receptors. This attachment induces virion internalization predominantly through clathrin-dependent endocytosis. Binding to the host receptors also induces capsid rearrangements leading to surface exposure of VP1 N-terminus, specifically its phospholipase A2-like region and putative nuclear localization signal(s). VP1 N-terminus might serve as a lipolytic enzyme to breach the endosomal membrane during entry into host cell and might contribute to virus transport to the nucleus. This is Capsid protein VP1 from Feline panleukopenia virus (strain 193) (FPV).